The following is a 494-amino-acid chain: Glutamyl-tRNA(Gln) amidotransferase subunit A (494 aa).

Catalysis depends on charge relay system residues Lys-79 and Ser-159. Residue Ser-183 is the Acyl-ester intermediate of the active site.

The protein belongs to the amidase family. GatA subfamily. In terms of assembly, heterotrimer of A, B and C subunits.

It catalyses the reaction L-glutamyl-tRNA(Gln) + L-glutamine + ATP + H2O = L-glutaminyl-tRNA(Gln) + L-glutamate + ADP + phosphate + H(+). In terms of biological role, allows the formation of correctly charged Gln-tRNA(Gln) through the transamidation of misacylated Glu-tRNA(Gln) in organisms which lack glutaminyl-tRNA synthetase. The reaction takes place in the presence of glutamine and ATP through an activated gamma-phospho-Glu-tRNA(Gln). This is Glutamyl-tRNA(Gln) amidotransferase subunit A from Bartonella bacilliformis (strain ATCC 35685 / KC583 / Herrer 020/F12,63).